Reading from the N-terminus, the 481-residue chain is Leukocyte immunoglobulin-like receptor subfamily A member 6 (481 aa).

The signal sequence occupies residues 1–23; that stretch reads MTPALTALLCLGLSLGPRTHVQA. One can recognise an Ig-like C2-type 1 domain in the interval 24–118; it reads GPLPKPTLWA…PSDPLELVVT (95 aa). Over 24–447 the chain is Extracellular; it reads GPLPKPTLWA…SHAKDYTVEN (424 aa). The cysteines at positions 49 and 98 are disulfide-linked. N-linked (GlcNAc...) asparagine glycosylation is present at Asn-139. 2 disulfide bridges follow: Cys-144–Cys-196 and Cys-245–Cys-296. 2 Ig-like C2-type domains span residues 225 to 314 and 323 to 408; these read PSLL…DPLN and DRVS…HLLS. N-linked (GlcNAc...) asparagine glycans are attached at residues Asn-301 and Asn-340. An intrachain disulfide couples Cys-345 to Cys-396. The tract at residues 418–439 is disordered; the sequence is VSGPSGGPSLPPTGPPSTPASH. The segment covering 426 to 435 has biased composition (pro residues); the sequence is SLPPTGPPST. Residues 448–468 traverse the membrane as a helical segment; the sequence is LIRMGMAGLVLVVLGILLFEA. Residues 469-481 are Cytoplasmic-facing; that stretch reads QHSQRSPQDAARR.

It localises to the membrane. Functionally, may act as receptor for class I MHC antigens. This is Leukocyte immunoglobulin-like receptor subfamily A member 6 (LILRA6) from Pan troglodytes (Chimpanzee).